The sequence spans 442 residues: Histidine--tRNA ligase (442 aa).

This sequence belongs to the class-II aminoacyl-tRNA synthetase family. Homodimer.

It is found in the cytoplasm. It catalyses the reaction tRNA(His) + L-histidine + ATP = L-histidyl-tRNA(His) + AMP + diphosphate + H(+). This Helicobacter hepaticus (strain ATCC 51449 / 3B1) protein is Histidine--tRNA ligase.